The following is a 589-amino-acid chain: Peroxisomal biogenesis factor 8 (589 aa).

Positions Ser-587 to Leu-589 match the Microbody targeting signal motif.

The protein localises to the peroxisome matrix. Its function is as follows. Required for peroxisome assembly. This is Peroxisomal biogenesis factor 8 (PEX8) from Saccharomyces cerevisiae (strain ATCC 204508 / S288c) (Baker's yeast).